The chain runs to 556 residues: MNHSEALTEQVFSFASELYAYGVREVVISPGSRSTPLALVFEAHPNIKTWIHPDERSAAFFALGLIKGSEKPVAILCTSGTAAANYTPAIAESQISRLPLVVLTSDRPHELRSVGAPQAINQVNMFSNYVNFQFDLPIADGSEHTIDTINYQMQIASQYLYGPHRGPIHFNLPFREPLTPDLDRVDLLTSVTKTLPHYQKSISVDDIKDILQEKNGLIIVGDMQHQAVDQILTYSTIYDLPILADPLSQLRKEKHPNVITTYDLLYRAGLNLEVDYVIRVGKPVISKKLNQWLKKTDAYQIIVQNNDQIDVFPTPPHISYEISANDFFRSLMEEPLVERKKWLQQWQSLEQQARIEISDYLKHATDEAAYVGSLIQKLTKEDTLFVGNSMPIRDVDNLLFDSEASVYANRGANGIDGVVSTALGMAAHKNVTLLIGDLSFYHDMNGLLMAKLNELHINIVLVNNNGGGIFSYLPQKRSATKYFERLFGTPTGLNFEYTALLYDFTFKRFDNLTDFKYAELSKMGSHMYEVITNRDENLHQHQNLYQKLSEIVNVTL.

Belongs to the TPP enzyme family. MenD subfamily. In terms of assembly, homodimer. Mg(2+) serves as cofactor. The cofactor is Mn(2+). Requires thiamine diphosphate as cofactor.

The enzyme catalyses isochorismate + 2-oxoglutarate + H(+) = 5-enolpyruvoyl-6-hydroxy-2-succinyl-cyclohex-3-ene-1-carboxylate + CO2. The protein operates within quinol/quinone metabolism; 1,4-dihydroxy-2-naphthoate biosynthesis; 1,4-dihydroxy-2-naphthoate from chorismate: step 2/7. It participates in quinol/quinone metabolism; menaquinone biosynthesis. Functionally, catalyzes the thiamine diphosphate-dependent decarboxylation of 2-oxoglutarate and the subsequent addition of the resulting succinic semialdehyde-thiamine pyrophosphate anion to isochorismate to yield 2-succinyl-5-enolpyruvyl-6-hydroxy-3-cyclohexene-1-carboxylate (SEPHCHC). The sequence is that of 2-succinyl-5-enolpyruvyl-6-hydroxy-3-cyclohexene-1-carboxylate synthase from Staphylococcus epidermidis (strain ATCC 35984 / DSM 28319 / BCRC 17069 / CCUG 31568 / BM 3577 / RP62A).